The primary structure comprises 519 residues: Ribonuclease Y (519 aa).

Residues Leu3–Leu23 form a helical membrane-spanning segment. Positions Thr209–Leu272 constitute a KH domain. The HD domain occupies Val335–Ala428.

The protein belongs to the RNase Y family.

Its subcellular location is the cell membrane. In terms of biological role, endoribonuclease that initiates mRNA decay. In Nitratidesulfovibrio vulgaris (strain ATCC 29579 / DSM 644 / CCUG 34227 / NCIMB 8303 / VKM B-1760 / Hildenborough) (Desulfovibrio vulgaris), this protein is Ribonuclease Y.